We begin with the raw amino-acid sequence, 280 residues long: Ataxin-3 homolog (280 aa).

Residues 7–187 (GGMLYHEVQE…QECPMSSSSE (181 aa)) form the Josephin domain. Cysteine 20 serves as the catalytic Nucleophile. The active-site Proton acceptor is histidine 126. Aspartate 141 is a catalytic residue. Polar residues-rich tracts occupy residues 183–194 (SSSSEASNSFGQ) and 221–232 (DNVNQQRRNQAL). The interval 183–240 (SSSSEASNSFGQWLSPEDAERIRKNTSSGSSARNKRSNDNVNQQRRNQALSREEVQAF) is disordered. A UIM domain is found at 243-262 (MEDDDLKAAIAASLLDASAA).

Its subcellular location is the nucleus. The enzyme catalyses Thiol-dependent hydrolysis of ester, thioester, amide, peptide and isopeptide bonds formed by the C-terminal Gly of ubiquitin (a 76-residue protein attached to proteins as an intracellular targeting signal).. Interacts with key regulators of transcription and represses transcription. Acts as a histone-binding protein that regulates transcription. Acts as a deubiquitinating enzyme. This Arabidopsis thaliana (Mouse-ear cress) protein is Ataxin-3 homolog.